We begin with the raw amino-acid sequence, 138 residues long: Basic phospholipase A2 DsM-b1/DsM-b1' (138 aa).

The first 16 residues, 1 to 16, serve as a signal peptide directing secretion; that stretch reads MRTLWIVAMCLIGVEG. 7 disulfide bridges follow: Cys-42/Cys-131, Cys-44/Cys-60, Cys-59/Cys-111, Cys-65/Cys-138, Cys-66/Cys-104, Cys-73/Cys-97, and Cys-91/Cys-102. Residues Tyr-43, Gly-45, and Gly-47 each contribute to the Ca(2+) site. The active site involves His-63. Ca(2+) is bound at residue Asp-64. Residue Asp-105 is part of the active site.

Ca(2+) is required as a cofactor. Expressed by the venom gland.

It localises to the secreted. The catalysed reaction is a 1,2-diacyl-sn-glycero-3-phosphocholine + H2O = a 1-acyl-sn-glycero-3-phosphocholine + a fatty acid + H(+). Its function is as follows. Exhibits high hydrolytic activities and shows strong preference for the anionic micelles (dPPC with deoxycholate) to the zwitterionic micelles (dPPC with Triton X-100). PLA2 catalyzes the calcium-dependent hydrolysis of the 2-acyl groups in 3-sn-phosphoglycerides. The sequence is that of Basic phospholipase A2 DsM-b1/DsM-b1' from Daboia siamensis (Eastern Russel's viper).